A 71-amino-acid chain; its full sequence is Small ribosomal subunit protein bS18 (71 aa).

This sequence belongs to the bacterial ribosomal protein bS18 family. In terms of assembly, part of the 30S ribosomal subunit. Forms a tight heterodimer with protein bS6.

Its function is as follows. Binds as a heterodimer with protein bS6 to the central domain of the 16S rRNA, where it helps stabilize the platform of the 30S subunit. The protein is Small ribosomal subunit protein bS18 of Synechococcus sp. (strain JA-2-3B'a(2-13)) (Cyanobacteria bacterium Yellowstone B-Prime).